Reading from the N-terminus, the 157-residue chain is Cyclic pyranopterin monophosphate synthase (157 aa).

Substrate-binding positions include 74–76 and 112–113; these read MCH and ME. Residue Asp-127 is part of the active site.

It belongs to the MoaC family. Homohexamer; trimer of dimers.

The enzyme catalyses (8S)-3',8-cyclo-7,8-dihydroguanosine 5'-triphosphate = cyclic pyranopterin phosphate + diphosphate. The protein operates within cofactor biosynthesis; molybdopterin biosynthesis. Its function is as follows. Catalyzes the conversion of (8S)-3',8-cyclo-7,8-dihydroguanosine 5'-triphosphate to cyclic pyranopterin monophosphate (cPMP). The sequence is that of Cyclic pyranopterin monophosphate synthase from Campylobacter jejuni subsp. jejuni serotype O:2 (strain ATCC 700819 / NCTC 11168).